We begin with the raw amino-acid sequence, 265 residues long: MTPQLLGFFDSGLGGLTVLRRVLERHGSVPCVYLGDTARVPYGNRQPDDIRRIAAEVVGWLRDQKVSTVVMACNTTNALARDVADGQAGAPVIGLIGAAAAMVETRRVGVLATPATVASSAYRASIEALHPGSMVIEQACPAFVPLIESGDMNSDDLRRAAQAYLEPLLAASVESIVLGCTHYPLLVPLLRQLLPESVQIIDPAIGVARQLDAVLRSPGPISAVPRPFSLESCRFCVTADPDGFAMRATPWLGQRPDVSLQLLPD.

Substrate is bound by residues 10 to 11 (DS) and 42 to 43 (YG). Cysteine 73 functions as the Proton donor/acceptor in the catalytic mechanism. Substrate is bound at residue 74-75 (NT). Cysteine 180 (proton donor/acceptor) is an active-site residue. 181 to 182 (TH) is a substrate binding site.

The protein belongs to the aspartate/glutamate racemases family.

The catalysed reaction is L-glutamate = D-glutamate. Its pathway is cell wall biogenesis; peptidoglycan biosynthesis. In terms of biological role, provides the (R)-glutamate required for cell wall biosynthesis. The sequence is that of Glutamate racemase from Synechococcus sp. (strain CC9605).